We begin with the raw amino-acid sequence, 130 residues long: Transcription antitermination protein NusB (130 aa).

The protein belongs to the NusB family.

Involved in transcription antitermination. Required for transcription of ribosomal RNA (rRNA) genes. Binds specifically to the boxA antiterminator sequence of the ribosomal RNA (rrn) operons. The polypeptide is Transcription antitermination protein NusB (Geobacillus kaustophilus (strain HTA426)).